Reading from the N-terminus, the 663-residue chain is MDAGERIRELADRIVELRTAYYEGAPLVADAEYDAVEDELRALIAAHPELAPDPNPLDQVGAPAVLHAPVRHSRPMLSLEKATTPEQVAAFFERFPGQPVVVMPKLDGLSLALVYEDGRLVRAVTRGDGTTGDDVTMLVRALVDGVPEQIDVPGRVEVRGEAVMLRSTFLAYNAAHPDKPLINPRNAAAGTLRAKDPATVAERRLRFFGFDLDTAEGGAAADLGEGLRALGIAGAAMRMCADAEQAQAAITDIERGRNDLDYDIDGAVLRLADRDAYAAAGTRSNSPRGALAFKFAAEEKTTVLEAVTWDVGKTGKIVPVARLEPVFVGGTTVTKATLANQQVIRARDIKVGDTVLVRRAGDVIPFVAGVLDASKRTGAEVEIVPPTECPSCGQPVTEQGNSRELFCTNASCPAQTVRRLIHWASRAAADIDAIGGVWIERLAEAGILENPSDFYTLTKERLLEFDRIGEVSATRMIESIDRSRDVGLRRALIGLAIPMASEGTAARLARAGFASLEEVADAGEERLVAVEDIGPKVAASLVEHLTRLRPELERLRERGVSLDVREEDLPPVVAAGAPLAGKTVVVTGAISDPRSGEKVARPTFQRLCEKAGATAASSVSANTDLLITGAGVGESKLAKAEKLGVEIVDQATIWAQLIEAKLV.

Residues aspartate 30–aspartate 34 and serine 78–leucine 79 each bind NAD(+). The N6-AMP-lysine intermediate role is filled by lysine 105. Residues arginine 126, glutamate 161, and lysine 294 each coordinate NAD(+). Positions 389, 392, 407, and 412 each coordinate Zn(2+). The BRCT domain maps to alanine 574–valine 663.

Belongs to the NAD-dependent DNA ligase family. LigA subfamily. Mg(2+) is required as a cofactor. It depends on Mn(2+) as a cofactor.

The enzyme catalyses NAD(+) + (deoxyribonucleotide)n-3'-hydroxyl + 5'-phospho-(deoxyribonucleotide)m = (deoxyribonucleotide)n+m + AMP + beta-nicotinamide D-nucleotide.. Functionally, DNA ligase that catalyzes the formation of phosphodiester linkages between 5'-phosphoryl and 3'-hydroxyl groups in double-stranded DNA using NAD as a coenzyme and as the energy source for the reaction. It is essential for DNA replication and repair of damaged DNA. This is DNA ligase 1 from Nocardia farcinica (strain IFM 10152).